The chain runs to 81 residues: Cortexin-2 (81 aa).

A helical transmembrane segment spans residues 29-49 (TAFAFVGMLLVFLGLLIVRCF).

The protein belongs to the cortexin family.

The protein resides in the membrane. The chain is Cortexin-2 (ctxn2) from Danio rerio (Zebrafish).